The sequence spans 24 residues: Small ribosomal subunit protein uS19c (24 aa).

This sequence belongs to the universal ribosomal protein uS19 family.

It is found in the plastid. It localises to the chloroplast. In terms of biological role, protein S19 forms a complex with S13 that binds strongly to the 16S ribosomal RNA. This chain is Small ribosomal subunit protein uS19c (rps19), found in Petunia hybrida (Petunia).